The following is a 383-amino-acid chain: Pyruvate synthase subunit PorA (383 aa).

In terms of assembly, heterotetramer of one alpha, one beta, one delta and one gamma chain.

The enzyme catalyses 2 oxidized [2Fe-2S]-[ferredoxin] + pyruvate + CoA = 2 reduced [2Fe-2S]-[ferredoxin] + acetyl-CoA + CO2 + H(+). The polypeptide is Pyruvate synthase subunit PorA (porA) (Methanothermobacter thermautotrophicus (strain ATCC 29096 / DSM 1053 / JCM 10044 / NBRC 100330 / Delta H) (Methanobacterium thermoautotrophicum)).